A 684-amino-acid chain; its full sequence is DNA ligase (684 aa).

NAD(+)-binding positions include 34–38 (DYDFD), 83–84 (SL), and Glu-117. Lys-119 acts as the N6-AMP-lysine intermediate in catalysis. 4 residues coordinate NAD(+): Arg-140, Glu-188, Lys-301, and Lys-325. Cys-419, Cys-422, Cys-437, and Cys-443 together coordinate Zn(2+). The 83-residue stretch at 602 to 684 (DAPQTFAGMT…QTMLAAESGD (83 aa)) folds into the BRCT domain.

This sequence belongs to the NAD-dependent DNA ligase family. LigA subfamily. It depends on Mg(2+) as a cofactor. Mn(2+) is required as a cofactor.

The catalysed reaction is NAD(+) + (deoxyribonucleotide)n-3'-hydroxyl + 5'-phospho-(deoxyribonucleotide)m = (deoxyribonucleotide)n+m + AMP + beta-nicotinamide D-nucleotide.. DNA ligase that catalyzes the formation of phosphodiester linkages between 5'-phosphoryl and 3'-hydroxyl groups in double-stranded DNA using NAD as a coenzyme and as the energy source for the reaction. It is essential for DNA replication and repair of damaged DNA. This is DNA ligase from Chloroherpeton thalassium (strain ATCC 35110 / GB-78).